Here is a 221-residue protein sequence, read N- to C-terminus: UPF0758 protein PC1_4100 (221 aa).

An MPN domain is found at 99-221; sequence AMLNPQATGQ…YVSFAERGWI (123 aa). Zn(2+)-binding residues include His-170, His-172, and Asp-183. The JAMM motif motif lies at 170 to 183; sequence HNHPSGKAEPSQAD.

This sequence belongs to the UPF0758 family. YicR subfamily.

This is UPF0758 protein PC1_4100 from Pectobacterium carotovorum subsp. carotovorum (strain PC1).